Reading from the N-terminus, the 507-residue chain is Proline--tRNA ligase (507 aa).

It belongs to the class-II aminoacyl-tRNA synthetase family. ProS type 3 subfamily. In terms of assembly, homodimer.

The protein localises to the cytoplasm. The enzyme catalyses tRNA(Pro) + L-proline + ATP = L-prolyl-tRNA(Pro) + AMP + diphosphate. Functionally, catalyzes the attachment of proline to tRNA(Pro) in a two-step reaction: proline is first activated by ATP to form Pro-AMP and then transferred to the acceptor end of tRNA(Pro). The polypeptide is Proline--tRNA ligase (Protochlamydia amoebophila (strain UWE25)).